Here is an 845-residue protein sequence, read N- to C-terminus: Protein SPA1-RELATED 3 (845 aa).

Residues 1–19 (MEGSSNSNSRGFNTSGVSD) are compositionally biased toward polar residues. Disordered stretches follow at residues 1–33 (MEGS…LTTR) and 139–158 (CSDS…KEIG). Residues 1-297 (MEGSSNSNSR…MSDLLQSEFI (297 aa)) form the Protein kinase domain. The stretch at 301–329 (RDNLEEREAAIELRDRIEEQESLLEFLLL) forms a coiled coil. WD repeat units follow at residues 532 to 571 (NSSN…NDNR), 581 to 621 (AGRS…LVTE), 624 to 664 (EHKK…SIGT), 666 to 706 (KTKA…IPLC), 710 to 748 (GHSK…SGIN), 757 to 796 (GHTN…PVMS), and 812 to 845 (DASQ…EMMT). Residues 685-699 (AFGSADHKVYYYDLR) carry the DWD box motif.

As to quaternary structure, interacts with COP1 and CO.

It is found in the nucleus. Its function is as follows. Repressor of photomorphogenesis in the light. Probably part of the COP1/SPA E3 ubiquitin-protein ligase complex. The sequence is that of Protein SPA1-RELATED 3 (SPA3) from Arabidopsis thaliana (Mouse-ear cress).